A 141-amino-acid chain; its full sequence is Hemoglobin subunit alpha (141 aa).

Positions 1–141 constitute a Globin domain; that stretch reads VLSPADKSNV…VSTVLTSKYR (141 aa). Ser-3 is subject to Phosphoserine. An N6-succinyllysine mark is found at Lys-7 and Lys-11. N6-acetyllysine; alternate is present on Lys-16. N6-succinyllysine; alternate is present on Lys-16. Phosphotyrosine is present on Tyr-24. Ser-35 is modified (phosphoserine). Position 40 is an N6-succinyllysine (Lys-40). Residue Ser-49 is modified to Phosphoserine. Residue His-58 participates in O2 binding. Residue His-87 coordinates heme b. Residue Ser-102 is modified to Phosphoserine. Thr-108 carries the phosphothreonine modification. A phosphoserine mark is found at Ser-124 and Ser-131. A phosphothreonine mark is found at Thr-134 and Thr-137. Position 138 is a phosphoserine (Ser-138).

The protein belongs to the globin family. In terms of assembly, heterotetramer of two alpha chains and two beta chains. As to expression, red blood cells.

In terms of biological role, involved in oxygen transport from the lung to the various peripheral tissues. Functionally, hemopressin acts as an antagonist peptide of the cannabinoid receptor CNR1. Hemopressin-binding efficiently blocks cannabinoid receptor CNR1 and subsequent signaling. In Leontocebus fuscicollis (Brown-mantled tamarin), this protein is Hemoglobin subunit alpha (HBA).